Here is an 89-residue protein sequence, read N- to C-terminus: Small ribosomal subunit protein uS17 (89 aa).

The protein belongs to the universal ribosomal protein uS17 family. Part of the 30S ribosomal subunit.

In terms of biological role, one of the primary rRNA binding proteins, it binds specifically to the 5'-end of 16S ribosomal RNA. The polypeptide is Small ribosomal subunit protein uS17 (Xanthomonas axonopodis pv. citri (strain 306)).